The chain runs to 310 residues: Methionyl-tRNA formyltransferase (310 aa).

109-112 (SLLP) provides a ligand contact to (6S)-5,6,7,8-tetrahydrofolate.

This sequence belongs to the Fmt family.

The enzyme catalyses L-methionyl-tRNA(fMet) + (6R)-10-formyltetrahydrofolate = N-formyl-L-methionyl-tRNA(fMet) + (6S)-5,6,7,8-tetrahydrofolate + H(+). Functionally, attaches a formyl group to the free amino group of methionyl-tRNA(fMet). The formyl group appears to play a dual role in the initiator identity of N-formylmethionyl-tRNA by promoting its recognition by IF2 and preventing the misappropriation of this tRNA by the elongation apparatus. In Alkaliphilus oremlandii (strain OhILAs) (Clostridium oremlandii (strain OhILAs)), this protein is Methionyl-tRNA formyltransferase.